The following is a 513-amino-acid chain: ATP synthase subunit alpha (513 aa).

Residue 169–176 (GDRQVGKT) coordinates ATP.

It belongs to the ATPase alpha/beta chains family. As to quaternary structure, F-type ATPases have 2 components, CF(1) - the catalytic core - and CF(0) - the membrane proton channel. CF(1) has five subunits: alpha(3), beta(3), gamma(1), delta(1), epsilon(1). CF(0) has three main subunits: a(1), b(2) and c(9-12). The alpha and beta chains form an alternating ring which encloses part of the gamma chain. CF(1) is attached to CF(0) by a central stalk formed by the gamma and epsilon chains, while a peripheral stalk is formed by the delta and b chains.

It localises to the cell inner membrane. The enzyme catalyses ATP + H2O + 4 H(+)(in) = ADP + phosphate + 5 H(+)(out). Produces ATP from ADP in the presence of a proton gradient across the membrane. The alpha chain is a regulatory subunit. This chain is ATP synthase subunit alpha, found in Aeromonas salmonicida (strain A449).